A 138-amino-acid chain; its full sequence is Small ribosomal subunit protein uS11c (138 aa).

Positions 1-23 are disordered; the sequence is MAKPIPRIGSRRNGRISSRKSTR. Positions 9–23 are enriched in basic residues; the sequence is GSRRNGRISSRKSTR.

It belongs to the universal ribosomal protein uS11 family. As to quaternary structure, part of the 30S ribosomal subunit.

Its subcellular location is the plastid. The protein resides in the chloroplast. The protein is Small ribosomal subunit protein uS11c of Cucumis sativus (Cucumber).